Consider the following 1783-residue polypeptide: MITSTSSTEVLTPANGSDDSKGTTTPATSSGDPEMHDDLLRNDTHDDVAIIGMACRVPGDVNSPSALWQFLLEKGDASGDMPTWRWDPYRQRHPRNAAVLAETTAKGYFLNDIDQFDAAFFAISPREAEQMDPQQRIALEVAWEALENAGISPSRLAGSNTSVYMGVNSDDYAKLVLEDLPDVGAHMGVGTAYCGIPSRISYLLDLMGPSVAMDAACASSLVAVHHARQAIRAGETDLAIAGGVNALLGPGLTRVLDEAGAISADGKCRSFDDSASGYGRGEGAGVVILKRLDKALTDGDQVLAVLKGSAVASDGKTLGIMAPNAQAQLLVAQKALKEAKVTSDSINYIEAHATSTSLGDPTETNALAEVYGVGSGRHPSDPCYIGSIKPNIGHLEAGAGVMGLIKAVLVLRYGEVPPQANLQTLNSKIAWKENLLRPARELVTLPRGALSRPLRAAIASYGYSGTVSHAIIEAFAGQSLFAERLAQIPDSDAAPALLLLSVPQANRISTTAAGLSRWLRDMDGAVSLATVASTLSQRRMHHRFRHAIVADSVANAIATLDDLAKDVPSRWAISDRIGSEAGKGAVWVFSGHGAQWPDMGRELFHSSPAFGEVVRNLEPIIQAELGFSAIETLHAGCPDRTDLIQAMTFLMHLGIAAVLEAESGPPTAVVGHSLGEAAAAVVSGALTWHEAALVVCRRARLYREFMGQGAMALVRLSASEARARIATHPGASVAIETSPTACVVSGTVDALQRLSEQWLEEGVEVRAVATDVPFHTPLLEKLAGPLRGALKNELHPQVPHRALYSTSLLDPRSDLLRDAEYWVMNMIQPVLLQSTVAALVDDGFRAFVEVASHPIITHSIVETISEQTTDRFIATPTMVRKQPALKSILAAVGRLHCFGCAVKPTDLDPTVPWSSSVPGTIWHHQSFYRAVSGMTAAQLASTHKPAANDLLGTRTALWGTEEVLYQTRLEEDNRPFPGRHPLHGSEIVPAAVLLRTFLRALSPRSVEEVSLQVPVVVSPAREIQIRHNTRNITITSRLEESTSNEHNSWLVNTTATVGADATPSVSHVDIAEVAKRLPQKLSDSFSIDYLASVGVSAMGFPWRVAHHVASDNEMLARVHANPDSLPGMDDLLTSVMDAATSIASTLWHSKPRLRMPTAVRRVVAVGVATPQVVYIHCTKAQSSVDEADVIISSEEGMVLMEIQGMAFAGVEGESLSRKSTSGLVHQISWPPAALAEEPLEFAHIAFLTADATKAQVGTYQRQIEGRGISTSIHERASDLPLTTHSSMAVVYLPQFTDRIFDTATRSCNDLVTAAQVILSSSDKPTIRLFAVTSESNLGHSALTGLGRILHTEHPEIWGSLIDLEDPSVFPLMAMRYVRNADVIKIEDGVPRTARLRPLRPAPPHSTAGPATLTFSPASTYLITGGLGSLGISVAQWMVTQGARRILLLSRRSLPPRSIWTASHKPGTQFIIDSILSLERLGATIHPVAIDISHPSAVTNLRSALTTLSLPPVAGVVHAAGILRDQLIEQITPDAFEAVLAPKIAGALALHTVFPPSSPDLDFFVLFSSCGQLLGFPGQASYASGNSFLDALARSRRKEGDNAISLLWTSWRGMGMGASSNGALEAELYARGITDVTPDEAFLAWSSISGTEGADHGVVLRARPLESGEPLPHAILRDIAPRKEKAVGEGNGENEEQRKKLSGKELAEYVLVVVKKCVSTTLSIPEDEVDETVALPEMGMDSVMTVNFRMSLQQTLTVSVGPTLVWKYPTVHHLVEYFCQVLDE.

Polar residues predominate over residues 1–31; that stretch reads MITSTSSTEVLTPANGSDDSKGTTTPATSSG. Positions 1–40 are disordered; it reads MITSTSSTEVLTPANGSDDSKGTTTPATSSGDPEMHDDLL. The 430-residue stretch at 45 to 474 folds into the Ketosynthase family 3 (KS3) domain; sequence HDDVAIIGMA…GTVSHAIIEA (430 aa). Active-site for beta-ketoacyl synthase activity residues include cysteine 217, histidine 352, and histidine 394. Residues 587-884 are malonyl-CoA:ACP transacylase (MAT) domain; sequence WVFSGHGAQW…TPTMVRKQPA (298 aa). The For acyl/malonyl transferase activity role is filled by serine 673. The tract at residues 942–1215 is product template (PT) domain; the sequence is THKPAANDLL…AFAGVEGESL (274 aa). Residues 948–1064 are N-terminal hotdog fold; the sequence is NDLLGTRTAL…ATVGADATPS (117 aa). The region spanning 948-1216 is the PKS/mFAS DH domain; that stretch reads NDLLGTRTAL…FAGVEGESLS (269 aa). Residue histidine 980 is the Proton acceptor; for dehydratase activity of the active site. Positions 1078-1216 are C-terminal hotdog fold; the sequence is PQKLSDSFSI…FAGVEGESLS (139 aa). The Proton donor; for dehydratase activity role is filled by aspartate 1130. Residues 1707 to 1781 form the Carrier domain; sequence EYVLVVVKKC…HLVEYFCQVL (75 aa). Serine 1741 bears the O-(pantetheine 4'-phosphoryl)serine mark.

The enzyme catalyses 3 malonyl-CoA + acetyl-CoA + NADPH + 3 H(+) = 6-methylsalicylate + 3 CO2 + NADP(+) + 4 CoA + H2O. Its pathway is secondary metabolite biosynthesis; terpenoid biosynthesis. Non-reducing polyketide synthase; part of the gene cluster that mediates the biosynthesis of macrophorins, isoprenoid epoxycyclohexenones containing cyclized drimane moieties. The first step of the pathway is the synthesis of 6-methylsalicylic acid (6-MSA) by the polyketide synthase macA. 6-MSA is then converted to m-cresol by the decarboxylase macB. The cytochrome P450 monooxygenase macC then catalyzes the oxidation of m-cresol to toluquinol. Epoxidation of toluquinol is then performed by the short chain dehydrogenase macD, with the help of macE, and a further prenylation by macG leads to 7-deacetoxyyanuthone A. The next step is the hydroxylation of C-22 of 7-deacetoxyyanuthone A by the cytochrome P450 monooxygenase macH to yield 22-deacetylyanuthone A. O-Mevalon transferase macI then attaches mevalon to the hydroxyl group of 22-deacetylyanuthone A to produce yanuthone E. The terpene cyclase macJ catalyzes the cyclization of 22-deacetylyanuthone A to macrophorin A. MacJ is also able to catalyze cyclization of yanuthone E and 7-deacetoxyyanuthone A to their corresponding macrophorins. The macJ products can be further modified by macH and macJ, as well as by the FAD-dependent monooxygenase macF, to produce additional macrophorins, including 4'-oxomacrophorin A, 4'-oxomacrophorin D and 4'-oxomacrophorin E. In Penicillium terrestre, this protein is 6-methylsalicylic acid synthase.